The primary structure comprises 589 residues: PTS system mannitol-specific EIICB component (589 aa).

The Cytoplasmic portion of the chain corresponds to 1–25; the sequence is MEEKVSLKVRVQKLGTSLSNMVMPN. Positions 14–347 constitute a PTS EIIC type-2 domain; that stretch reads LGTSLSNMVM…LHADKSTEDS (334 aa). The helical transmembrane segment at 26-47 threads the bilayer; sequence IGAFIAWGVLTALFIADGYLPN. At 48–51 the chain is on the extracellular side; it reads EQLA. A helical transmembrane segment spans residues 52 to 72; it reads TVVGPMLTYLLPILIGYTGGY. Topologically, residues 73–135 are cytoplasmic; the sequence is MIHGQRGAVV…PGFEMLVNNF (63 aa). Residues 136-157 traverse the membrane as a helical segment; the sequence is SAGLVGFALLLLAFYAIGPVVS. Residues 158-166 lie on the Extracellular side of the membrane; sequence TLTGAVGNG. Residues 167–187 traverse the membrane as a helical segment; that stretch reads VEAIVNARLLPMANIIIEPAK. The Cytoplasmic segment spans residues 188-274; sequence VLFLNNALNH…VMMKPTLFLA (87 aa). Residues 275–294 traverse the membrane as a helical segment; it reads AMAGGISGTFTFQLLDAGLK. The Extracellular segment spans residues 295–316; that stretch reads SPASPGSIIAIIATAPKGVWPH. A helical transmembrane segment spans residues 317 to 338; that stretch reads LNVLLGVLVAAVVSFLVAALIL. The Cytoplasmic segment spans residues 339–589; the sequence is HADKSTEDSL…YDKMAARMYK (251 aa). The PTS EIIB type-2 domain maps to 381 to 476; sequence EKIIFACDAG…SLTGASPIAE (96 aa). The active-site Phosphocysteine intermediate; for EIIB activity is the Cys-387. A Phosphocysteine; by EIIA modification is found at Cys-387.

In terms of assembly, homodimer.

It localises to the cell membrane. It catalyses the reaction D-mannitol(out) + N(pros)-phospho-L-histidyl-[protein] = D-mannitol 1-phosphate(in) + L-histidyl-[protein]. Its function is as follows. The phosphoenolpyruvate-dependent sugar phosphotransferase system (sugar PTS), a major carbohydrate active transport system, catalyzes the phosphorylation of incoming sugar substrates concomitantly with their translocation across the cell membrane. The enzyme II CmtAB PTS system is involved in D-mannitol transport. In Streptococcus pneumoniae serotype 4 (strain ATCC BAA-334 / TIGR4), this protein is PTS system mannitol-specific EIICB component (mtlA).